The sequence spans 420 residues: Serine hydroxymethyltransferase (420 aa).

(6S)-5,6,7,8-tetrahydrofolate-binding positions include Leu-121 and 125–127; that span reads GHL. Lys-229 is subject to N6-(pyridoxal phosphate)lysine.

It belongs to the SHMT family. In terms of assembly, homodimer. Requires pyridoxal 5'-phosphate as cofactor.

Its subcellular location is the cytoplasm. It catalyses the reaction (6R)-5,10-methylene-5,6,7,8-tetrahydrofolate + glycine + H2O = (6S)-5,6,7,8-tetrahydrofolate + L-serine. It functions in the pathway one-carbon metabolism; tetrahydrofolate interconversion. The protein operates within amino-acid biosynthesis; glycine biosynthesis; glycine from L-serine: step 1/1. Its function is as follows. Catalyzes the reversible interconversion of serine and glycine with tetrahydrofolate (THF) serving as the one-carbon carrier. This reaction serves as the major source of one-carbon groups required for the biosynthesis of purines, thymidylate, methionine, and other important biomolecules. Also exhibits THF-independent aldolase activity toward beta-hydroxyamino acids, producing glycine and aldehydes, via a retro-aldol mechanism. In Glaesserella parasuis serovar 5 (strain SH0165) (Haemophilus parasuis), this protein is Serine hydroxymethyltransferase.